The chain runs to 594 residues: Elongation factor 4 (594 aa).

The 183-residue stretch at 2-184 folds into the tr-type G domain; it reads KNIRNFSIIA…TIVAKVPAPE (183 aa). GTP-binding positions include 14 to 19 and 131 to 134; these read DHGKST and NKID.

The protein belongs to the TRAFAC class translation factor GTPase superfamily. Classic translation factor GTPase family. LepA subfamily.

The protein resides in the cell inner membrane. It carries out the reaction GTP + H2O = GDP + phosphate + H(+). Its function is as follows. Required for accurate and efficient protein synthesis under certain stress conditions. May act as a fidelity factor of the translation reaction, by catalyzing a one-codon backward translocation of tRNAs on improperly translocated ribosomes. Back-translocation proceeds from a post-translocation (POST) complex to a pre-translocation (PRE) complex, thus giving elongation factor G a second chance to translocate the tRNAs correctly. Binds to ribosomes in a GTP-dependent manner. The chain is Elongation factor 4 from Francisella tularensis subsp. tularensis (strain WY96-3418).